A 462-amino-acid polypeptide reads, in one-letter code: Argininosuccinate lyase (462 aa).

The protein belongs to the lyase 1 family. Argininosuccinate lyase subfamily.

It localises to the cytoplasm. The catalysed reaction is 2-(N(omega)-L-arginino)succinate = fumarate + L-arginine. It functions in the pathway amino-acid biosynthesis; L-arginine biosynthesis; L-arginine from L-ornithine and carbamoyl phosphate: step 3/3. This Dechloromonas aromatica (strain RCB) protein is Argininosuccinate lyase.